The primary structure comprises 98 residues: NADH-ubiquinone oxidoreductase chain 4L (98 aa).

A run of 3 helical transmembrane segments spans residues 1 to 21 (MSLTYMNMFLAFTISLVGLLM), 29 to 49 (ALLCLEGMMLSLFVMMTITIL), and 61 to 81 (IILLVFAACEAALGLSLLVMV).

Belongs to the complex I subunit 4L family. In terms of assembly, core subunit of respiratory chain NADH dehydrogenase (Complex I) which is composed of 45 different subunits.

The protein localises to the mitochondrion inner membrane. The catalysed reaction is a ubiquinone + NADH + 5 H(+)(in) = a ubiquinol + NAD(+) + 4 H(+)(out). Functionally, core subunit of the mitochondrial membrane respiratory chain NADH dehydrogenase (Complex I) which catalyzes electron transfer from NADH through the respiratory chain, using ubiquinone as an electron acceptor. Part of the enzyme membrane arm which is embedded in the lipid bilayer and involved in proton translocation. The sequence is that of NADH-ubiquinone oxidoreductase chain 4L (MT-ND4L) from Rhinophylla pumilio (Dwarf little fruit bat).